A 560-amino-acid chain; its full sequence is Diphtheria toxin (560 aa).

The N-terminal stretch at 1-25 (MSRKLFASILIGALLGIGAPPSAHA) is a signal peptide. Positions 46 and 90 each coordinate NAD(+). The active site involves Glu173. 2 disulfides stabilise this stretch: Cys211–Cys226 and Cys486–Cys496.

As to quaternary structure, homodimer.

The catalysed reaction is diphthamide-[translation elongation factor 2] + NAD(+) = N-(ADP-D-ribosyl)diphthamide-[translation elongation factor 2] + nicotinamide + H(+). Diphtheria toxin, produced by a phage infecting Corynebacterium diphtheriae, is a proenzyme that, after activation, catalyzes the covalent attachment of the ADP ribose moiety of NAD to elongation factor 2. Fragment A is responsible for enzymatic ADP-ribosylation of elongation factor 2, while fragment B is responsible for binding of toxin to cell receptors and entry of fragment A. This chain is Diphtheria toxin, found in Corynephage omega.